The primary structure comprises 257 residues: Hydroxyacylglutathione hydrolase (257 aa).

7 residues coordinate Zn(2+): His-54, His-56, Asp-58, His-59, His-113, Asp-137, and His-175.

The protein belongs to the metallo-beta-lactamase superfamily. Glyoxalase II family. Monomer. Requires Zn(2+) as cofactor.

It carries out the reaction an S-(2-hydroxyacyl)glutathione + H2O = a 2-hydroxy carboxylate + glutathione + H(+). Its pathway is secondary metabolite metabolism; methylglyoxal degradation; (R)-lactate from methylglyoxal: step 2/2. Functionally, thiolesterase that catalyzes the hydrolysis of S-D-lactoyl-glutathione to form glutathione and D-lactic acid. The chain is Hydroxyacylglutathione hydrolase from Nostoc punctiforme (strain ATCC 29133 / PCC 73102).